The chain runs to 164 residues: Peptide deformylase-like (164 aa).

Glu133 is an active-site residue.

Belongs to the polypeptide deformylase family.

In Agrobacterium fabrum (strain C58 / ATCC 33970) (Agrobacterium tumefaciens (strain C58)), this protein is Peptide deformylase-like.